We begin with the raw amino-acid sequence, 512 residues long: GMP synthase [glutamine-hydrolyzing] (512 aa).

The Glutamine amidotransferase type-1 domain occupies 7–197 (TIIVLDFGSQ…VFGVCGCSEG (191 aa)). C84 functions as the Nucleophile in the catalytic mechanism. Residues H171 and E173 contribute to the active site. Residues 198 to 387 (WNMENFIEVE…LGIPDEIVWR (190 aa)) form the GMPS ATP-PPase domain. 225–231 (SGGVDSS) lines the ATP pocket.

In terms of assembly, homodimer.

The enzyme catalyses XMP + L-glutamine + ATP + H2O = GMP + L-glutamate + AMP + diphosphate + 2 H(+). It participates in purine metabolism; GMP biosynthesis; GMP from XMP (L-Gln route): step 1/1. Its function is as follows. Catalyzes the synthesis of GMP from XMP. The polypeptide is GMP synthase [glutamine-hydrolyzing] (Bacillus cereus (strain B4264)).